The primary structure comprises 415 residues: MGTTTSHPAQKKQTTKKCRAPIMSDVREKPSNAQGCEPQEMDAVSKKVTELSLNKCSDSQDAGQPSREGSITKKKSTLLLRDEDEPTMPKLSVMETAVDTDSGSSSTSDDEEGDIIAQTTEPKQDASPDDDRSGHSSPREEGQQQIRAKEASGGPSEIKSSLMVPVEIRWQQGGSKVYVTGSFTKWRKMIGLIPDSDNNGSFHVKLRLLPGTHRFRFIVDNELRVSDFLPTATDQMGNFVNYIEVRQPEKNPTNEKIRSKEADSMRPPTSDRSSIALQIGKDPDDFGDGYTRFHEDLSPRPPLEYTTDIPAVFTDPSVMERYYYTLDRQQSNTDTSWLTPPQLPPQLENVILNKYYATQDQFNENNSGALPIPNHVVLNHLVTSSIKHNTLCVASIVRYKQKYVTQILYTPIESS.

Disordered regions lie at residues 1-43 (MGTT…EMDA), 55-158 (KCSD…PSEI), and 249-276 (EKNP…SSIA). G2 is lipidated: N-myristoyl glycine. Over residues 9–19 (AQKKQTTKKCR) the composition is skewed to basic residues. The span at 55–69 (KCSDSQDAGQPSREG) shows a compositional bias: polar residues. At S66 the chain carries Phosphoserine. Composition is skewed to basic and acidic residues over residues 122-150 (PKQD…RAKE) and 249-264 (EKNP…EADS). Residues 154–335 (GPSEIKSSLM…LDRQQSNTDT (182 aa)) form a kinase-interacting sequence (KIS); required for interaction with SNF1 region. Phosphoserine is present on S298. The segment at 336-415 (SWLTPPQLPP…QILYTPIESS (80 aa)) is association with SNF1 kinase complex (ASC) domain; required for interaction with SNF4.

It belongs to the 5'-AMP-activated protein kinase beta subunit family. In terms of assembly, component of the SNF1 kinase complex, a heterotrimeric complex composed of the catalytic alpha subunit SNF1, one of the three related beta subunits SIP1, SIP2 or GAL83, and the regulatory gamma subunit SNF4. The beta subunit serves as a bridge between the catalytic and the regulatory subunit. Interacts (via KIS domain) with SNF1. Interacts (via ASC domain) with SNF4. Post-translationally, phosphorylated by SNF1 in vitro.

The protein localises to the cytoplasm. The protein resides in the cell membrane. Functionally, beta subunit of the SNF1 kinase complex, which is required for transcriptional, metabolic, and developmental adaptations in response to glucose limitation. Has a structural role, mediating heterotrimer formation, and a regulatory role, defining carbon source-regulated subcellular location and substrate specificity of the SNF1 kinase complex. Involved in the regulation of aging. Acts as a negative regulator of nuclear SNF1 activity in young cells by sequestering its activating gamma subunit at the plasma membrane. The polypeptide is SNF1 protein kinase subunit beta-2 (SIP2) (Saccharomyces cerevisiae (strain ATCC 204508 / S288c) (Baker's yeast)).